The sequence spans 447 residues: Glutamate--tRNA ligase 1 (447 aa).

Positions 10–20 match the 'HIGH' region motif; that stretch reads PSPTGMLHVGN. Residues 240-244 carry the 'KMSKS' region motif; the sequence is KISKR. An ATP-binding site is contributed by K243.

Belongs to the class-I aminoacyl-tRNA synthetase family. Glutamate--tRNA ligase type 1 subfamily. In terms of assembly, monomer.

The protein localises to the cytoplasm. The enzyme catalyses tRNA(Glu) + L-glutamate + ATP = L-glutamyl-tRNA(Glu) + AMP + diphosphate. Functionally, catalyzes the attachment of glutamate to tRNA(Glu) in a two-step reaction: glutamate is first activated by ATP to form Glu-AMP and then transferred to the acceptor end of tRNA(Glu). This Rickettsia akari (strain Hartford) protein is Glutamate--tRNA ligase 1.